Reading from the N-terminus, the 144-residue chain is Large ribosomal subunit protein uL15 (144 aa).

A compositionally biased stretch (basic residues) spans 1 to 13; it reads MVRERTKKLRGGH. Positions 1 to 32 are disordered; it reads MVRERTKKLRGGHYGRGFKAGRGKGKKGGSGN.

Belongs to the universal ribosomal protein uL15 family. Part of the 50S ribosomal subunit.

Binds to the 23S rRNA. This is Large ribosomal subunit protein uL15 from Thermoplasma acidophilum (strain ATCC 25905 / DSM 1728 / JCM 9062 / NBRC 15155 / AMRC-C165).